The sequence spans 344 residues: uncharacterized protein (344 aa).

One can recognise an HTH araC/xylS-type domain in the interval 242–343 (RGITALVRSK…GVAPSEYSRR (102 aa)). 2 consecutive DNA-binding regions (H-T-H motif) follow at residues 263-284 (TDVA…AEEG) and 310-333 (VQQV…KRWY).

This is an uncharacterized protein from Mycobacterium bovis (strain ATCC BAA-935 / AF2122/97).